We begin with the raw amino-acid sequence, 653 residues long: MELDLSVLGRSFIVTRRNSSITRPCIQSSNFSVRVLQRNKHRPLCFSTNPSNSSFIRFQKGCDFSHRCQFVVLSATGDHVGISQKHSDSTEKVDSIRILLKRGIVLGAVVCGVLFYGCGKVLASTSVVDVAFSKSILLLKNAWPKTSQVLKVLREQGLILAVLLGLSAFFSMAETSITTLWPWKVRELAEKEPENGVFRMLRSDVTRFLTTILIGTTVVNIAATALVTKAATAIFGEAGVSAATGVMTVAILLLTEITPKSVAVHNAQEVARIVVRPVAWLSLILYPVGRVVTYLSMGILKILGLKGRSEPYVTEDELKLMLRGAELSGAIEEEEQDMIENVLEIKDTHVREVMTPLVDVVAIDGSGSLVDFHNFWVTHQYSRVPVFEQRIDNIVGIAYAMDLLDYVPKGKLLESTTVVDMAHKPAFFVPDSMSVWNLLREFRIRKVHMAVVLNEYGGTIGIVTLEDVVEEIVGEIFDENDSKEEIQKKTGYIVMRAEGIYDVDANTSIDQLSEELNIKMAEGHQYETVSGFVCEAFGYIPKTGESVTVVLEKENWEENDEQDEGKHERQDQKEKHQIYRLEILAGNARKVSAVRFERVSDMDQVSEARDVKNMVPKFVRKWSSEEDSDGNLQAKNAVFDEHLIAETESMKKE.

Residues 1-72 (MELDLSVLGR…DFSHRCQFVV (72 aa)) constitute a chloroplast transit peptide. The next 5 membrane-spanning stretches (helical) occupy residues 103–123 (GIVLGAVVCGVLFYGCGKVLA), 157–177 (GLILAVLLGLSAFFSMAETSI), 208–228 (FLTTILIGTTVVNIAATALVT), 234–254 (IFGEAGVSAATGVMTVAILLL), and 280–300 (WLSLILYPVGRVVTYLSMGIL). The 187-residue stretch at 149–335 (VLKVLREQGL…ELSGAIEEEE (187 aa)) folds into the CNNM transmembrane domain. CBS domains follow at residues 354-415 (MTPL…LLES) and 421-479 (MAHK…IFDE).

The protein localises to the plastid. It localises to the chloroplast membrane. This is DUF21 domain-containing protein At1g55930, chloroplastic (CBSDUFCH2) from Arabidopsis thaliana (Mouse-ear cress).